A 329-amino-acid chain; its full sequence is Transaldolase (329 aa).

Catalysis depends on K136, which acts as the Schiff-base intermediate with substrate.

This sequence belongs to the transaldolase family. Type 1 subfamily. Homodimer.

It is found in the cytoplasm. It catalyses the reaction D-sedoheptulose 7-phosphate + D-glyceraldehyde 3-phosphate = D-erythrose 4-phosphate + beta-D-fructose 6-phosphate. It functions in the pathway carbohydrate degradation; pentose phosphate pathway; D-glyceraldehyde 3-phosphate and beta-D-fructose 6-phosphate from D-ribose 5-phosphate and D-xylulose 5-phosphate (non-oxidative stage): step 2/3. Functionally, transaldolase is important for the balance of metabolites in the pentose-phosphate pathway. The protein is Transaldolase of Methylococcus capsulatus (strain ATCC 33009 / NCIMB 11132 / Bath).